A 144-amino-acid polypeptide reads, in one-letter code: MKIVDANVLLYAVNTTSEHHKPSLRWLDGALSGADRVGFAWVPLLAFVRLATKVGLFPRPLPREAAITQVADWLAAPSAVLVNPTVRHADILARMLTYVGTGANLVNDAHLAALAVEHRASIVSYDSDFGRFEGVRWDQPPALL.

The PINc domain maps to 3–137 (IVDANVLLYA…DFGRFEGVRW (135 aa)). Mg(2+) contacts are provided by D5 and D90.

The protein belongs to the PINc/VapC protein family. The cofactor is Mg(2+).

The protein resides in the secreted. Functionally, probable toxic component of a type II toxin-antitoxin (TA) system. An RNase. Upon expression in M.smegmatis inhibits colony formation. The putative cognate antitoxin is VapB37. This chain is Ribonuclease VapC37, found in Mycobacterium tuberculosis (strain ATCC 25618 / H37Rv).